The sequence spans 341 residues: Biotin synthase (341 aa).

Residues 43 to 266 (SEIQLSQLLS…IAVARIVCPK (224 aa)) enclose the Radical SAM core domain. [4Fe-4S] cluster is bound by residues C58, C62, and C65. 4 residues coordinate [2Fe-2S] cluster: C102, C133, C193, and R270.

This sequence belongs to the radical SAM superfamily. Biotin synthase family. Homodimer. It depends on [4Fe-4S] cluster as a cofactor. Requires [2Fe-2S] cluster as cofactor.

It carries out the reaction (4R,5S)-dethiobiotin + (sulfur carrier)-SH + 2 reduced [2Fe-2S]-[ferredoxin] + 2 S-adenosyl-L-methionine = (sulfur carrier)-H + biotin + 2 5'-deoxyadenosine + 2 L-methionine + 2 oxidized [2Fe-2S]-[ferredoxin]. It participates in cofactor biosynthesis; biotin biosynthesis; biotin from 7,8-diaminononanoate: step 2/2. In terms of biological role, catalyzes the conversion of dethiobiotin (DTB) to biotin by the insertion of a sulfur atom into dethiobiotin via a radical-based mechanism. This chain is Biotin synthase, found in Caulobacter vibrioides (strain ATCC 19089 / CIP 103742 / CB 15) (Caulobacter crescentus).